A 194-amino-acid chain; its full sequence is uncharacterized protein (194 aa).

The Exonuclease domain occupies 20-185 (RIFIDTETTG…ADCRMTLGII (166 aa)).

This is an uncharacterized protein from Escherichia coli (Bacteriophage 186).